Here is a 1048-residue protein sequence, read N- to C-terminus: NACHT, LRR and PYD domains-containing protein 8 (1048 aa).

Residues M1–H23 form a disordered region. Residues P11 to H23 show a composition bias toward low complexity. Positions P33–E131 constitute a Pyrin domain. The region spanning K204 to L527 is the NACHT domain. ATP is bound at residue G210–T217. LRR repeat units follow at residues N815–V838, A839–S861, S866–A890, N923–N950, and N980–S1007. The tract at residues P1029 to P1048 is disordered.

This sequence belongs to the NLRP family.

It is found in the cytoplasm. Involved in inflammation. The protein is NACHT, LRR and PYD domains-containing protein 8 (NLRP8) of Homo sapiens (Human).